Consider the following 612-residue polypeptide: Heparan-sulfate 6-O-sulfotransferase 2 (612 aa).

Residues 1–4 lie on the Cytoplasmic side of the membrane; sequence MALP. Residues 5–27 form a helical; Signal-anchor for type II membrane protein membrane-spanning segment; sequence AFAARALGPPLQPEQGAPARTTC. Residues 9-52 are disordered; that stretch reads RALGPPLQPEQGAPARTTCPRRHSRVEAELAASRPGSVAASVRA. Topologically, residues 28–612 are lumenal; it reads PRRHSRVEAE…DYIGSVETWR (585 aa). Asn-209 carries an N-linked (GlcNAc...) asparagine glycan. Residue 233-241 coordinates 3'-phosphoadenylyl sulfate; sequence HIQKTGGTT. Substrate contacts are provided by residues 263-264, Arg-280, Trp-285, and His-290; that span reads KK. Residue His-290 is the Proton acceptor of the active site. 3'-phosphoadenylyl sulfate contacts are provided by Arg-325 and Ser-333. Substrate contacts are provided by His-337 and Trp-344. N-linked (GlcNAc...) asparagine glycosylation occurs at Asn-404. Residue 457 to 459 coordinates 3'-phosphoadenylyl sulfate; the sequence is TQY. N-linked (GlcNAc...) asparagine glycosylation occurs at Asn-460. Position 463-464 (463-464) interacts with 3'-phosphoadenylyl sulfate; it reads RA. The tract at residues 529-612 is disordered; that stretch reads HFQSQSQGQS…DYIGSVETWR (84 aa). Residues 531 to 564 show a composition bias toward low complexity; that stretch reads QSQSQGQSQSQSPGQNLSQNPNPNPNQNLTQNLS. 5 N-linked (GlcNAc...) asparagine glycosylation sites follow: Asn-546, Asn-558, Asn-562, Asn-574, and Asn-599. Polar residues predominate over residues 565–577; sequence HNLTPSSNPNSTQ.

This sequence belongs to the sulfotransferase 6 family.

Its subcellular location is the membrane. It catalyses the reaction alpha-D-glucosaminyl-[heparan sulfate](n) + 3'-phosphoadenylyl sulfate = 6-sulfo-alpha-D-glucosaminyl-[heparan sulfate](n) + adenosine 3',5'-bisphosphate + H(+). In terms of biological role, 6-O-sulfation enzyme which catalyzes the transfer of sulfate from 3'-phosphoadenosine 5'-phosphosulfate (PAPS) to position 6 of the N-sulfoglucosamine residue (GlcNS) of heparan sulfate. The polypeptide is Heparan-sulfate 6-O-sulfotransferase 2 (Hs6st2) (Mus musculus (Mouse)).